Consider the following 142-residue polypeptide: MAEVSEEIRNLAARHQELQRQAEALRQEMGMIQTSISSCDQTIVTINELKAASEAGKPAETMVPVGFGSYVYAEVKNPDRIIVNLGAEFSAEETAEEAIETLNRRKEQLTKILEQMNASLTRLTQGMQTLEAEAAKLQPGQA.

The protein belongs to the prefoldin subunit alpha family. In terms of assembly, heterohexamer of two alpha and four beta subunits.

The protein localises to the cytoplasm. Molecular chaperone capable of stabilizing a range of proteins. Seems to fulfill an ATP-independent, HSP70-like function in archaeal de novo protein folding. This is Prefoldin subunit alpha from Methanosarcina acetivorans (strain ATCC 35395 / DSM 2834 / JCM 12185 / C2A).